We begin with the raw amino-acid sequence, 229 residues long: Small ribosomal subunit protein uS5 (229 aa).

Positions 61 to 124 constitute an S5 DRBM domain; the sequence is LEEQVLDVKL…AHAKLSLIKV (64 aa).

The protein belongs to the universal ribosomal protein uS5 family. In terms of assembly, part of the 30S ribosomal subunit. Contacts protein S4.

Its function is as follows. With S4 and S12 plays an important role in translational accuracy. This is Small ribosomal subunit protein uS5 from Methanococcus maripaludis (strain C6 / ATCC BAA-1332).